A 242-amino-acid chain; its full sequence is GDSL esterase/lipase At5g62930 (242 aa).

The active-site Nucleophile is serine 11. The interval 223–242 (PHHSHIDGKNPSKAFEERCL) is disordered.

This sequence belongs to the 'GDSL' lipolytic enzyme family.

The sequence is that of GDSL esterase/lipase At5g62930 from Arabidopsis thaliana (Mouse-ear cress).